A 197-amino-acid polypeptide reads, in one-letter code: NAD(P)H-quinone oxidoreductase subunit 6, chloroplastic (197 aa).

The next 5 membrane-spanning stretches (helical) occupy residues 10-30 (FVLA…VLLV), 39-59 (LGLV…DFVA), 60-80 (AAQL…AVMI), 94-114 (IGYI…SFVI), and 147-167 (LLGE…AALV).

It belongs to the complex I subunit 6 family. NDH is composed of at least 16 different subunits, 5 of which are encoded in the nucleus.

It is found in the plastid. Its subcellular location is the chloroplast thylakoid membrane. It catalyses the reaction a plastoquinone + NADH + (n+1) H(+)(in) = a plastoquinol + NAD(+) + n H(+)(out). It carries out the reaction a plastoquinone + NADPH + (n+1) H(+)(in) = a plastoquinol + NADP(+) + n H(+)(out). Functionally, NDH shuttles electrons from NAD(P)H:plastoquinone, via FMN and iron-sulfur (Fe-S) centers, to quinones in the photosynthetic chain and possibly in a chloroplast respiratory chain. The immediate electron acceptor for the enzyme in this species is believed to be plastoquinone. Couples the redox reaction to proton translocation, and thus conserves the redox energy in a proton gradient. This is NAD(P)H-quinone oxidoreductase subunit 6, chloroplastic (ndhG) from Adiantum capillus-veneris (Maidenhair fern).